A 101-amino-acid chain; its full sequence is Putative pterin-4-alpha-carbinolamine dehydratase (101 aa).

Belongs to the pterin-4-alpha-carbinolamine dehydratase family.

It carries out the reaction (4aS,6R)-4a-hydroxy-L-erythro-5,6,7,8-tetrahydrobiopterin = (6R)-L-erythro-6,7-dihydrobiopterin + H2O. The chain is Putative pterin-4-alpha-carbinolamine dehydratase from Burkholderia mallei (strain ATCC 23344).